The following is a 468-amino-acid chain: Glutamate--tRNA ligase 2 (468 aa).

The 'HIGH' region motif lies at 9–19; the sequence is PSPTGFLHIGG. Residues 238–242 carry the 'KMSKS' region motif; that stretch reads KLSKR. Residue Lys-241 participates in ATP binding.

It belongs to the class-I aminoacyl-tRNA synthetase family. Glutamate--tRNA ligase type 1 subfamily. In terms of assembly, monomer.

It is found in the cytoplasm. The enzyme catalyses tRNA(Glu) + L-glutamate + ATP = L-glutamyl-tRNA(Glu) + AMP + diphosphate. Its function is as follows. Catalyzes the attachment of glutamate to tRNA(Glu) in a two-step reaction: glutamate is first activated by ATP to form Glu-AMP and then transferred to the acceptor end of tRNA(Glu). This Rhodospirillum rubrum (strain ATCC 11170 / ATH 1.1.1 / DSM 467 / LMG 4362 / NCIMB 8255 / S1) protein is Glutamate--tRNA ligase 2.